A 241-amino-acid polypeptide reads, in one-letter code: 1-(5-phosphoribosyl)-5-[(5-phosphoribosylamino)methylideneamino] imidazole-4-carboxamide isomerase (241 aa).

The active-site Proton acceptor is Asp8. Asp130 (proton donor) is an active-site residue.

It belongs to the HisA/HisF family.

The protein resides in the cytoplasm. It carries out the reaction 1-(5-phospho-beta-D-ribosyl)-5-[(5-phospho-beta-D-ribosylamino)methylideneamino]imidazole-4-carboxamide = 5-[(5-phospho-1-deoxy-D-ribulos-1-ylimino)methylamino]-1-(5-phospho-beta-D-ribosyl)imidazole-4-carboxamide. Its pathway is amino-acid biosynthesis; L-histidine biosynthesis; L-histidine from 5-phospho-alpha-D-ribose 1-diphosphate: step 4/9. This Leptospira borgpetersenii serovar Hardjo-bovis (strain L550) protein is 1-(5-phosphoribosyl)-5-[(5-phosphoribosylamino)methylideneamino] imidazole-4-carboxamide isomerase.